The sequence spans 37 residues: MKVRASVKPICSKCKVVRRKGIVRIICENPKHKQKQG.

The protein belongs to the bacterial ribosomal protein bL36 family.

The protein is Large ribosomal subunit protein bL36 of Syntrophotalea carbinolica (strain DSM 2380 / NBRC 103641 / GraBd1) (Pelobacter carbinolicus).